The chain runs to 98 residues: NADH-ubiquinone oxidoreductase chain 4L (98 aa).

The next 3 membrane-spanning stretches (helical) occupy residues 1 to 21, 26 to 46, and 61 to 81; these read MPLI…GVLI, LMSS…LVSL, and LILL…LVMV.

The protein belongs to the complex I subunit 4L family. Core subunit of respiratory chain NADH dehydrogenase (Complex I) which is composed of 45 different subunits.

The protein localises to the mitochondrion inner membrane. The enzyme catalyses a ubiquinone + NADH + 5 H(+)(in) = a ubiquinol + NAD(+) + 4 H(+)(out). Functionally, core subunit of the mitochondrial membrane respiratory chain NADH dehydrogenase (Complex I) which catalyzes electron transfer from NADH through the respiratory chain, using ubiquinone as an electron acceptor. Part of the enzyme membrane arm which is embedded in the lipid bilayer and involved in proton translocation. This chain is NADH-ubiquinone oxidoreductase chain 4L (MT-ND4L), found in Nycticebus coucang (Slow loris).